The chain runs to 88 residues: Period circadian protein (88 aa).

The segment at 23-88 (VTNTSIAGTG…VTLTESLLNK (66 aa)) is disordered. 16 consecutive repeat copies span residues 30–31 (GT), 33–34 (GT), 35–36 (GT), 37–38 (GT), 39–40 (GT), 41–42 (GT), 43–44 (GT), 45–46 (GT), 47–48 (GT), 49–50 (GT), 51–52 (GT), 53–54 (GT), 55–56 (GT), 57–58 (GT), 59–60 (GT), and 61–62 (GN). Residues 30-62 (GTGGTGTGTGTGTGTGTGTGTGTGTGTGTGTGN) form a 16 X 2 AA tandem repeats of G-[TN] region. Gly residues predominate over residues 30–62 (GTGGTGTGTGTGTGTGTGTGTGTGTGTGTGTGN). Residues 79-88 (VTLTESLLNK) are compositionally biased toward polar residues.

Forms a heterodimer with timeless (TIM); the complex then translocates into the nucleus. Post-translationally, phosphorylated with a circadian rhythmicity, probably by the double-time protein (dbt). Phosphorylation could be implicated in the stability of per monomer and in the formation of heterodimer per-tim.

The protein localises to the nucleus. Its subcellular location is the cytoplasm. It is found in the perinuclear region. Essential for biological clock functions. Determines the period length of circadian and ultradian rhythms; an increase in PER dosage leads to shortened circadian rhythms and a decrease leads to lengthened circadian rhythms. Essential for the circadian rhythmicity of locomotor activity, eclosion behavior, and for the rhythmic component of the male courtship song that originates in the thoracic nervous system. The biological cycle depends on the rhythmic formation and nuclear localization of the TIM-PER complex. Light induces the degradation of TIM, which promotes elimination of PER. Nuclear activity of the heterodimer coordinatively regulates PER and TIM transcription through a negative feedback loop. Behaves as a negative element in circadian transcriptional loop. Does not appear to bind DNA, suggesting indirect transcriptional inhibition. This chain is Period circadian protein (per), found in Drosophila teissieri (Fruit fly).